A 683-amino-acid chain; its full sequence is Cysteine-rich receptor-like protein kinase 28 (683 aa).

Positions 1 to 24 (MEHVRVIFFFFACVLKIVPFICLA) are cleaved as a signal peptide. Topologically, residues 25–288 (QKDKYEFPPG…RTGKGKGGSK (264 aa)) are extracellular. 2 consecutive Gnk2-homologous domains span residues 32 to 136 (PPGF…NMII) and 142 to 251 (TTPT…TWRF). Residues Asn-43, Asn-47, Asn-73, and Asn-153 are each glycosylated (N-linked (GlcNAc...) asparagine). Residues 263–283 (PAIQPADSPTSAARTERTGKG) are disordered. Residues 289–309 (VIVAIVIPIVFVALFAICLCL) form a helical membrane-spanning segment. The Cytoplasmic portion of the chain corresponds to 310–683 (LLKWKKNKSV…DVTVSELSPR (374 aa)). The region spanning 361–641 (FSPENELGRG…ALMLNSYSYT (281 aa)) is the Protein kinase domain. ATP-binding positions include 367-375 (LGRGGFGSV) and Lys-389. Position 434 is a phosphotyrosine (Tyr-434). Asp-486 functions as the Proton acceptor in the catalytic mechanism. A Phosphoserine modification is found at Ser-490. The residue at position 528 (Thr-528) is a Phosphothreonine. Phosphotyrosine is present on Tyr-536.

This sequence belongs to the protein kinase superfamily. Ser/Thr protein kinase family. CRK subfamily.

The protein localises to the membrane. It carries out the reaction L-seryl-[protein] + ATP = O-phospho-L-seryl-[protein] + ADP + H(+). The catalysed reaction is L-threonyl-[protein] + ATP = O-phospho-L-threonyl-[protein] + ADP + H(+). The sequence is that of Cysteine-rich receptor-like protein kinase 28 (CRK28) from Arabidopsis thaliana (Mouse-ear cress).